We begin with the raw amino-acid sequence, 210 residues long: dTTP/UTP pyrophosphatase (210 aa).

The active-site Proton acceptor is D80.

This sequence belongs to the Maf family. YhdE subfamily. The cofactor is a divalent metal cation.

The protein resides in the cytoplasm. It carries out the reaction dTTP + H2O = dTMP + diphosphate + H(+). The enzyme catalyses UTP + H2O = UMP + diphosphate + H(+). Its function is as follows. Nucleoside triphosphate pyrophosphatase that hydrolyzes dTTP and UTP. May have a dual role in cell division arrest and in preventing the incorporation of modified nucleotides into cellular nucleic acids. In Nitratidesulfovibrio vulgaris (strain ATCC 29579 / DSM 644 / CCUG 34227 / NCIMB 8303 / VKM B-1760 / Hildenborough) (Desulfovibrio vulgaris), this protein is dTTP/UTP pyrophosphatase.